The primary structure comprises 97 residues: Putative defensin-like protein 237 (97 aa).

Residues 1–23 (MRHATSPIVFCFLIFLVMNHVKG) form the signal peptide. Cystine bridges form between C30/C94, C40/C71, C48/C84, and C69/C86.

This sequence belongs to the DEFL family.

The protein resides in the secreted. In Arabidopsis thaliana (Mouse-ear cress), this protein is Putative defensin-like protein 237 (SCRL21).